We begin with the raw amino-acid sequence, 140 residues long: Large ribosomal subunit protein bL19 (140 aa).

A compositionally biased stretch (basic and acidic residues) spans 113-126; sequence RIAERQDRTADGKI. The segment at 113-140 is disordered; it reads RIAERQDRTADGKIKKGGKSAPAPTAAE.

The protein belongs to the bacterial ribosomal protein bL19 family.

Functionally, this protein is located at the 30S-50S ribosomal subunit interface and may play a role in the structure and function of the aminoacyl-tRNA binding site. The protein is Large ribosomal subunit protein bL19 of Xanthobacter autotrophicus (strain ATCC BAA-1158 / Py2).